We begin with the raw amino-acid sequence, 631 residues long: 1-deoxy-D-xylulose-5-phosphate synthase (631 aa).

Thiamine diphosphate is bound by residues histidine 78 and 119–121; that span reads AHS. Aspartate 150 is a Mg(2+) binding site. Residues 151–152, asparagine 179, tyrosine 286, and glutamate 368 each bind thiamine diphosphate; that span reads GA. Position 179 (asparagine 179) interacts with Mg(2+).

This sequence belongs to the transketolase family. DXPS subfamily. Homodimer. Mg(2+) is required as a cofactor. Thiamine diphosphate serves as cofactor.

It catalyses the reaction D-glyceraldehyde 3-phosphate + pyruvate + H(+) = 1-deoxy-D-xylulose 5-phosphate + CO2. It functions in the pathway metabolic intermediate biosynthesis; 1-deoxy-D-xylulose 5-phosphate biosynthesis; 1-deoxy-D-xylulose 5-phosphate from D-glyceraldehyde 3-phosphate and pyruvate: step 1/1. Functionally, catalyzes the acyloin condensation reaction between C atoms 2 and 3 of pyruvate and glyceraldehyde 3-phosphate to yield 1-deoxy-D-xylulose-5-phosphate (DXP). In Verminephrobacter eiseniae (strain EF01-2), this protein is 1-deoxy-D-xylulose-5-phosphate synthase.